Reading from the N-terminus, the 1115-residue chain is Ubiquitin C-terminal hydrolase 13 (1115 aa).

Residues 1–51 (MTMMTPPPLDQQEDEEMLVPNPDLVEGPQPMEVAQTDPAATAVENPPPEDP) are disordered. The MATH domain maps to 53–178 (SLKFTWTIPM…NDTVLIEAEV (126 aa)). Residues 198 to 522 (VGLKNQGATC…NAYMLVYIRE (325 aa)) form the USP domain. Cys-207 acts as the Nucleophile in catalysis. The active-site Proton acceptor is His-454.

It belongs to the peptidase C19 family. In terms of assembly, interacts with SIC/RON3. Interacts with RGI1 and RGI2.

The catalysed reaction is Thiol-dependent hydrolysis of ester, thioester, amide, peptide and isopeptide bonds formed by the C-terminal Gly of ubiquitin (a 76-residue protein attached to proteins as an intracellular targeting signal).. Recognizes and hydrolyzes the peptide bond at the C-terminal Gly of ubiquitin. Involved in the processing of poly-ubiquitin precursors as well as that of ubiquitinated proteins. Positive regulator of root meristem development that, together with UBP12, prevents the ubiquitination and turnover of RGFR1 induced by the RGF1 hormone peptide, thus influencing PLT1 and PLT2 expression. The protein is Ubiquitin C-terminal hydrolase 13 of Arabidopsis thaliana (Mouse-ear cress).